We begin with the raw amino-acid sequence, 204 residues long: N-(5'-phosphoribosyl)anthranilate isomerase (204 aa).

The protein belongs to the TrpF family.

The catalysed reaction is N-(5-phospho-beta-D-ribosyl)anthranilate = 1-(2-carboxyphenylamino)-1-deoxy-D-ribulose 5-phosphate. It functions in the pathway amino-acid biosynthesis; L-tryptophan biosynthesis; L-tryptophan from chorismate: step 3/5. This chain is N-(5'-phosphoribosyl)anthranilate isomerase, found in Syntrophomonas wolfei subsp. wolfei (strain DSM 2245B / Goettingen).